The sequence spans 445 residues: NAD(P)H coenzyme A polysulfide/persulfide reductase (445 aa).

16–17 (AA) serves as a coordination point for FAD. Position 27 (R27) interacts with CoA. FAD contacts are provided by residues 38 to 39 (EA) and 45 to 47 (HAP). CoA is bound by residues 44–48 (SHAPC), 65–66 (YY), and R75. Residue C48 is the Redox-active of the active site. FAD is bound by residues V85, D283, and A301. CoA contacts are provided by N305 and K361. Residue Y425 coordinates FAD. CoA-binding residues include W433 and R441.

It belongs to the class-III pyridine nucleotide-disulfide oxidoreductase family. In terms of assembly, homodimer. Homotetramer. FAD is required as a cofactor.

It catalyses the reaction NADP(+) + 2 CoA = CoA-disulfide + NADPH + H(+). It carries out the reaction NAD(+) + 2 CoA = CoA-disulfide + NADH + H(+). In terms of biological role, catalyzes the NAD(P)H-dependent reduction of polysulfide, CoA-polysulfides, and CoA persulfide, as well as the reduction of a range of other small persulfides, including TNB and glutathione persulfides. The likely in vivo substrates are di-, poly-, and persulfide derivatives of coenzyme A, although polysulfide itself is also efficiently reduced. Shows coenzyme A disulfide reductase (CoADR) activity with both NADH and NADPH, with a preference for NADPH. May also play a role in the reduction of elemental sulfur. The polypeptide is NAD(P)H coenzyme A polysulfide/persulfide reductase (Pyrococcus horikoshii (strain ATCC 700860 / DSM 12428 / JCM 9974 / NBRC 100139 / OT-3)).